The chain runs to 98 residues: Small ribosomal subunit protein bS20 (98 aa).

A compositionally biased stretch (basic residues) spans 1 to 12 (MAPRKPSKKVGP). The disordered stretch occupies residues 1–34 (MAPRKPSKKVGPQKRPSAEKRVITSKKKQLRNQS).

This sequence belongs to the bacterial ribosomal protein bS20 family.

Functionally, binds directly to 16S ribosomal RNA. This Chlamydia muridarum (strain MoPn / Nigg) protein is Small ribosomal subunit protein bS20.